We begin with the raw amino-acid sequence, 310 residues long: tRNA-cytidine(32) 2-sulfurtransferase (310 aa).

The short motif at 45 to 50 (SGGKDS) is the PP-loop motif element. Residues Cys120, Cys123, and Cys211 each contribute to the [4Fe-4S] cluster site.

It belongs to the TtcA family. Homodimer. Mg(2+) serves as cofactor. [4Fe-4S] cluster is required as a cofactor.

The protein localises to the cytoplasm. It catalyses the reaction cytidine(32) in tRNA + S-sulfanyl-L-cysteinyl-[cysteine desulfurase] + AH2 + ATP = 2-thiocytidine(32) in tRNA + L-cysteinyl-[cysteine desulfurase] + A + AMP + diphosphate + H(+). It participates in tRNA modification. Catalyzes the ATP-dependent 2-thiolation of cytidine in position 32 of tRNA, to form 2-thiocytidine (s(2)C32). The sulfur atoms are provided by the cysteine/cysteine desulfurase (IscS) system. This is tRNA-cytidine(32) 2-sulfurtransferase from Shewanella sp. (strain ANA-3).